A 282-amino-acid chain; its full sequence is Formamidopyrimidine-DNA glycosylase (282 aa).

P2 (schiff-base intermediate with DNA) is an active-site residue. The active-site Proton donor is the E3. Residue K61 is the Proton donor; for beta-elimination activity of the active site. DNA contacts are provided by H93, R112, and K158. The segment at D244–P278 adopts an FPG-type zinc-finger fold. R268 functions as the Proton donor; for delta-elimination activity in the catalytic mechanism.

The protein belongs to the FPG family. As to quaternary structure, monomer. Zn(2+) is required as a cofactor.

The catalysed reaction is Hydrolysis of DNA containing ring-opened 7-methylguanine residues, releasing 2,6-diamino-4-hydroxy-5-(N-methyl)formamidopyrimidine.. The enzyme catalyses 2'-deoxyribonucleotide-(2'-deoxyribose 5'-phosphate)-2'-deoxyribonucleotide-DNA = a 3'-end 2'-deoxyribonucleotide-(2,3-dehydro-2,3-deoxyribose 5'-phosphate)-DNA + a 5'-end 5'-phospho-2'-deoxyribonucleoside-DNA + H(+). In terms of biological role, involved in base excision repair of DNA damaged by oxidation or by mutagenic agents. Acts as a DNA glycosylase that recognizes and removes damaged bases. Has a preference for oxidized purines, such as 7,8-dihydro-8-oxoguanine (8-oxoG). Has AP (apurinic/apyrimidinic) lyase activity and introduces nicks in the DNA strand. Cleaves the DNA backbone by beta-delta elimination to generate a single-strand break at the site of the removed base with both 3'- and 5'-phosphates. This Mycobacterium leprae (strain Br4923) protein is Formamidopyrimidine-DNA glycosylase.